Consider the following 344-residue polypeptide: N-acetyl-gamma-glutamyl-phosphate reductase (344 aa).

The active site involves Cys149.

The protein belongs to the NAGSA dehydrogenase family. Type 1 subfamily.

It is found in the cytoplasm. The catalysed reaction is N-acetyl-L-glutamate 5-semialdehyde + phosphate + NADP(+) = N-acetyl-L-glutamyl 5-phosphate + NADPH + H(+). Its pathway is amino-acid biosynthesis; L-arginine biosynthesis; N(2)-acetyl-L-ornithine from L-glutamate: step 3/4. Catalyzes the NADPH-dependent reduction of N-acetyl-5-glutamyl phosphate to yield N-acetyl-L-glutamate 5-semialdehyde. The protein is N-acetyl-gamma-glutamyl-phosphate reductase of Syntrophobacter fumaroxidans (strain DSM 10017 / MPOB).